Consider the following 222-residue polypeptide: DnaJ homolog subfamily B member 9 (222 aa).

The signal sequence occupies residues Met1–Ala23. Residues Ser26–Gly90 form the J domain. Residues His91 to Gln222 are divergent targeting domain. Ser133 carries the phosphoserine modification.

In terms of assembly, interacts with HSPA5/BiP; interaction is direct. Interacts with ERN1/IRE1 (via the luminal region). Interacts with DERL1. Not N-glycosylated.

It localises to the endoplasmic reticulum lumen. Co-chaperone for Hsp70 protein HSPA5/BiP that acts as a key repressor of the ERN1/IRE1-mediated unfolded protein response (UPR). J domain-containing co-chaperones stimulate the ATPase activity of Hsp70 proteins and are required for efficient substrate recognition by Hsp70 proteins. In the unstressed endoplasmic reticulum, interacts with the luminal region of ERN1/IRE1 and selectively recruits HSPA5/BiP: HSPA5/BiP disrupts the dimerization of the active ERN1/IRE1 luminal region, thereby inactivating ERN1/IRE1. Also involved in endoplasmic reticulum-associated degradation (ERAD) of misfolded proteins. Required for survival of B-cell progenitors and normal antibody production. The polypeptide is DnaJ homolog subfamily B member 9 (Mus musculus (Mouse)).